The following is a 153-amino-acid chain: Large ribosomal subunit protein uL22 (153 aa).

Belongs to the universal ribosomal protein uL22 family. In terms of assembly, part of the 50S ribosomal subunit.

Functionally, this protein binds specifically to 23S rRNA. It makes multiple contacts with different domains of the 23S rRNA in the assembled 50S subunit and ribosome. Its function is as follows. The globular domain of the protein is located near the polypeptide exit tunnel on the outside of the subunit, while an extended beta-hairpin is found that lines the wall of the exit tunnel in the center of the 70S ribosome. This chain is Large ribosomal subunit protein uL22, found in Methanoculleus marisnigri (strain ATCC 35101 / DSM 1498 / JR1).